A 633-amino-acid chain; its full sequence is Membrane protein insertase YidC (633 aa).

The next 6 helical transmembrane spans lie at 3–23, 377–397, 453–473, 499–519, 541–561, and 562–582; these read KNTL…SWFN, FIHN…IILF, LPML…PSAI, IPII…LMTI, GMKA…NQYA, and SGLT…TLIF. The interval 612-633 is disordered; that stretch reads LEEAQRAQQETLRKQQEAKKKR.

This sequence belongs to the OXA1/ALB3/YidC family. Type 1 subfamily. As to quaternary structure, interacts with the Sec translocase complex via SecD. Specifically interacts with transmembrane segments of nascent integral membrane proteins during membrane integration.

It localises to the cell inner membrane. Functionally, required for the insertion and/or proper folding and/or complex formation of integral membrane proteins into the membrane. Involved in integration of membrane proteins that insert both dependently and independently of the Sec translocase complex, as well as at least some lipoproteins. Aids folding of multispanning membrane proteins. This Parabacteroides distasonis (strain ATCC 8503 / DSM 20701 / CIP 104284 / JCM 5825 / NCTC 11152) protein is Membrane protein insertase YidC.